Consider the following 567-residue polypeptide: MAKISRAAYADMFGPTVGDRVRLGDTELWIEVEKDYATYGHEVKFGGGKVIRDGMGQSQRPNTEAVDTVITNALILDHWGVVKADIGLKQGRIAAIGKAGNPDIQDNIDIIIGPGTEVIAGEGMIATAGGIDAHIHFICPQQIEEALMSGVTTMLGGGAGPATGTNATTCTPGPWHMGKMLQAADAFPMNLGFLGKGNASLPAALEEQMLAGAMGLKLHEDWGTTPASIDNCLNIAEKYDVQVAIHTDTLNESGFVEDTLAAFKGRTIHTYHTEGAGGGHAPDIIKACGELNVLPSSTNPTRPYTINTVDEHLDMLMVCHHLDPDIPEDVAFADSRIRKETIAAEDILHDLGAFSMISSDSQAMGRVGEVVCRTWQTAHKMKVQRGPLAQDSERADNFRAKRYIAKYTINPAIAHGIAHEVGSLEPGKLADIILWRPAFFGAKPSLIIKGGMIAAAPMGDANASIPTPQPVHYRPMFGAFGRAMQQTRLTFVCQAALDNGVKEQFGLQSPLSACRNTRTVTKKSMVLNDLTPQMEVDSQTYEVRANGELLVCEPAKVLPLAQRYFLF.

The Urease domain occupies 129 to 567 (GGIDAHIHFI…LPLAQRYFLF (439 aa)). Positions 134, 136, and 217 each coordinate Ni(2+). Lys217 carries the post-translational modification N6-carboxylysine. His219 is a binding site for substrate. Residues His246 and His272 each coordinate Ni(2+). The active-site Proton donor is His320. Asp360 is a Ni(2+) binding site.

The protein belongs to the metallo-dependent hydrolases superfamily. Urease alpha subunit family. In terms of assembly, heterotrimer of UreA (gamma), UreB (beta) and UreC (alpha) subunits. Three heterotrimers associate to form the active enzyme. Requires Ni cation as cofactor. Post-translationally, carboxylation allows a single lysine to coordinate two nickel ions.

The protein resides in the cytoplasm. It catalyses the reaction urea + 2 H2O + H(+) = hydrogencarbonate + 2 NH4(+). It participates in nitrogen metabolism; urea degradation; CO(2) and NH(3) from urea (urease route): step 1/1. This is Urease subunit alpha from Hahella chejuensis (strain KCTC 2396).